Here is a 257-residue protein sequence, read N- to C-terminus: MYACARTTKINHFRGTSTTQNPNRGLEPSPSSYVTRRSKEKRPINVEKRSHKKRKIICPLEEEPIQTTPPEWLLNVMRREENGYNPKLISTRQLYKTDLKKTEARLSVPFKQVKTPDFLTEDETRIIHENAMKIRDNGVPVNFVDPELNKHVLELRKWKMKGNWIYVFVKGWKNVLDACKTLFKEDDVYPLWSFRSGTGKLCFALTPKNSGRGNSLPGGDGASTSGESGQVPLPIPPARYSSNSGQGCSGESSSSSS.

A disordered region spans residues 5–50 (ARTTKINHFRGTSTTQNPNRGLEPSPSSYVTRRSKEKRPINVEKRS). The span at 8–35 (TKINHFRGTSTTQNPNRGLEPSPSSYVT) shows a compositional bias: polar residues. The TF-B3 DNA-binding region spans 115 to 209 (TPDFLTEDET…KLCFALTPKN (95 aa)). The tract at residues 212-257 (RGNSLPGGDGASTSGESGQVPLPIPPARYSSNSGQGCSGESSSSSS) is disordered. Residues 241–257 (SSNSGQGCSGESSSSSS) show a composition bias toward low complexity.

It localises to the nucleus. This Arabidopsis thaliana (Mouse-ear cress) protein is Putative B3 domain-containing protein At2g27410.